The following is a 379-amino-acid chain: SUN domain-containing protein 5 (379 aa).

The segment at 1–45 (MPRSSRSPGDPGALLEDVAHNPRPRRIAQRGRNTSRMAEDTSPNM) is disordered. At 1 to 105 (MPRSSRSPGD…LLCQKLMEKT (105 aa)) the chain is on the nuclear side. A compositionally biased stretch (polar residues) spans 31-45 (GRNTSRMAEDTSPNM). A helical membrane pass occupies residues 106–122 (GILLLCAFGFWMFSIHL). At 123-379 (PSKMKVWQDD…PHQNPYPKRD (257 aa)) the chain is on the perinuclear space side. The stretch at 141–182 (LRLYQEKVRHHSGEIQDLRGSMNQLIAKLQEMEAMSDEQKMA) forms a coiled coil. Residues 205 to 364 (GASIDFEHTS…YRVRVHGSVA (160 aa)) enclose the SUN domain.

In terms of assembly, probable homotrimer. Interacts with DNAJB13. Highly glycosylated in the Golgi apparatus during spermiogenesis. In terms of tissue distribution, sperm (at protein level). Widely expressed. Conflictingly shown to be specifically expressed in testis.

It localises to the nucleus inner membrane. The protein localises to the golgi apparatus. Functionally, plays an essential role in anchoring sperm head to the tail. Is responsible for the attachment of the coupling apparatus to the sperm nuclear envelope. This chain is SUN domain-containing protein 5 (SUN5), found in Homo sapiens (Human).